Here is a 159-residue protein sequence, read N- to C-terminus: Cyclic pyranopterin monophosphate synthase (159 aa).

Residues 75-77 (LCH) and 113-114 (ME) each bind substrate. Asp128 is an active-site residue.

The protein belongs to the MoaC family. In terms of assembly, homohexamer; trimer of dimers.

It catalyses the reaction (8S)-3',8-cyclo-7,8-dihydroguanosine 5'-triphosphate = cyclic pyranopterin phosphate + diphosphate. Its pathway is cofactor biosynthesis; molybdopterin biosynthesis. In terms of biological role, catalyzes the conversion of (8S)-3',8-cyclo-7,8-dihydroguanosine 5'-triphosphate to cyclic pyranopterin monophosphate (cPMP). This is Cyclic pyranopterin monophosphate synthase from Heliobacterium modesticaldum (strain ATCC 51547 / Ice1).